The sequence spans 321 residues: GTP cyclohydrolase FolE2 (321 aa).

Belongs to the GTP cyclohydrolase IV family.

It carries out the reaction GTP + H2O = 7,8-dihydroneopterin 3'-triphosphate + formate + H(+). It participates in cofactor biosynthesis; 7,8-dihydroneopterin triphosphate biosynthesis; 7,8-dihydroneopterin triphosphate from GTP: step 1/1. Converts GTP to 7,8-dihydroneopterin triphosphate. This Paracoccus denitrificans (strain Pd 1222) protein is GTP cyclohydrolase FolE2.